We begin with the raw amino-acid sequence, 113 residues long: MGGLEPCSRLLLLPLLLAVSGLRPVQAQAQSDCSCSTVSPGVLAGIVMGDLVLTVLIALAVYFLGRLVPRGRGAAEAATRKQRITETESPYQELQGQRSDVYSDLNTQRPYYK.

The signal sequence occupies residues 1–21 (MGGLEPCSRLLLLPLLLAVSG). The Extracellular segment spans residues 22 to 40 (LRPVQAQAQSDCSCSTVSP). The chain crosses the membrane as a helical span at residues 41 to 61 (GVLAGIVMGDLVLTVLIALAV). Asp-50 provides a ligand contact to Ca(2+). Residues 62–113 (YFLGRLVPRGRGAAEAATRKQRITETESPYQELQGQRSDVYSDLNTQRPYYK) are Cytoplasmic-facing. The tract at residues 75–113 (AEAATRKQRITETESPYQELQGQRSDVYSDLNTQRPYYK) is disordered. The 29-residue stretch at 80 to 108 (RKQRITETESPYQELQGQRSDVYSDLNTQ) folds into the ITAM domain. Positions 87 to 113 (TESPYQELQGQRSDVYSDLNTQRPYYK) are enriched in polar residues. Phosphotyrosine occurs at positions 91 and 102.

The protein belongs to the TYROBP family. As to quaternary structure, homodimer; disulfide-linked. Homotrimer; disulfide-linked. Homotetramer; disulfide-linked. Homotrimers and homotetramers form when low levels of partner receptors are available and are competitive with assembly with interacting receptors. They may represent alternative oligomerization states or may be intermediates in the receptor assembly process. Binding of a metal cation aids in homooligomerization through coordination of the metal ion by the subunits of the oligomer. Interacts with TREM1. Interacts with TREM2. Interacts with SIRPB1. Interacts with CLECSF5. Interacts with SIGLEC14. Interacts with CD300LB and CD300E. Interacts with CD300C2. Interacts (via ITAM domain) with SYK (via SH2 domains); activates SYK mediating neutrophil and macrophage integrin-mediated activation. Interacts with KLRC2, KIR2DS3 and KIR2DS5. Interacts with CD300H. Interacts with KIR2DS1. Interacts with KLRD1. Interacts with SIGLEC1. Post-translationally, following ligand binding by associated receptors, tyrosine phosphorylated in the ITAM domain which leads to activation of additional tyrosine kinases and subsequent cell activation. In terms of tissue distribution, expressed at low levels in the early development of the hematopoietic system and in the promonocytic stage and at high levels in mature monocytes. Expressed in hematological cells and tissues such as peripheral blood leukocytes and spleen. Also found in bone marrow, lymph nodes, placenta, lung and liver. Expressed at lower levels in different parts of the brain especially in the basal ganglia and corpus callosum.

It localises to the cell membrane. Its function is as follows. Adapter protein which non-covalently associates with activating receptors found on the surface of a variety of immune cells to mediate signaling and cell activation following ligand binding by the receptors. TYROBP is tyrosine-phosphorylated in the ITAM domain following ligand binding by the associated receptors which leads to activation of additional tyrosine kinases and subsequent cell activation. Also has an inhibitory role in some cells. Non-covalently associates with activating receptors of the CD300 family to mediate cell activation. Also mediates cell activation through association with activating receptors of the CD200R family. Required for neutrophil activation mediated by integrin. Required for the activation of myeloid cells mediated by the CLEC5A/MDL1 receptor. Associates with natural killer (NK) cell receptors such as KIR2DS2 and the KLRD1/KLRC2 heterodimer to mediate NK cell activation. Also enhances trafficking and cell surface expression of NK cell receptors KIR2DS1, KIR2DS2 and KIR2DS4 and ensures their stability at the cell surface. Associates with SIRPB1 to mediate activation of myeloid cells such as monocytes and dendritic cells. Associates with TREM1 to mediate activation of neutrophils and monocytes. Associates with TREM2 on monocyte-derived dendritic cells to mediate up-regulation of chemokine receptor CCR7 and dendritic cell maturation and survival. Association with TREM2 mediates cytokine-induced formation of multinucleated giant cells which are formed by the fusion of macrophages. Stabilizes the TREM2 C-terminal fragment (TREM2-CTF) produced by TREM2 ectodomain shedding which suppresses the release of pro-inflammatory cytokines. In microglia, required with TREM2 for phagocytosis of apoptotic neurons. Required with ITGAM/CD11B in microglia to control production of microglial superoxide ions which promote the neuronal apoptosis that occurs during brain development. Promotes pro-inflammatory responses in microglia following nerve injury which accelerates degeneration of injured neurons. Positively regulates the expression of the IRAK3/IRAK-M kinase and IL10 production by liver dendritic cells and inhibits their T cell allostimulatory ability. Negatively regulates B cell proliferation. Required for CSF1-mediated osteoclast cytoskeletal organization. Positively regulates multinucleation during osteoclast development. In Homo sapiens (Human), this protein is TYRO protein tyrosine kinase-binding protein.